The chain runs to 191 residues: Imidazoleglycerol-phosphate dehydratase (191 aa).

This sequence belongs to the imidazoleglycerol-phosphate dehydratase family.

It is found in the cytoplasm. It catalyses the reaction D-erythro-1-(imidazol-4-yl)glycerol 3-phosphate = 3-(imidazol-4-yl)-2-oxopropyl phosphate + H2O. Its pathway is amino-acid biosynthesis; L-histidine biosynthesis; L-histidine from 5-phospho-alpha-D-ribose 1-diphosphate: step 6/9. This chain is Imidazoleglycerol-phosphate dehydratase, found in Methanococcoides burtonii (strain DSM 6242 / NBRC 107633 / OCM 468 / ACE-M).